The following is a 537-amino-acid chain: Putative cysteine ligase BshC (537 aa).

The stretch at isoleucine 422–isoleucine 450 forms a coiled coil.

This sequence belongs to the BshC family.

In terms of biological role, involved in bacillithiol (BSH) biosynthesis. May catalyze the last step of the pathway, the addition of cysteine to glucosamine malate (GlcN-Mal) to generate BSH. In Staphylococcus aureus (strain Mu3 / ATCC 700698), this protein is Putative cysteine ligase BshC.